The sequence spans 236 residues: NAP1-binding protein 2 (236 aa).

Phosphoserine is present on serine 102. Positions 110-171 constitute an SH3 domain; the sequence is IVNQRAVALY…PEEFVSYIQP (62 aa). Phosphoserine is present on residues serine 196 and serine 235.

In terms of assembly, interacts with PBS2 and PTC1.

It is found in the cytoplasm. In terms of biological role, negatively regulates the high-osmolarity glycerol (HOG) pathway through its negative regulation of the HOG1 kinase activity. Mediates the binding between the PTC1 phosphatase and the PBS2 MAP/ERK kinase (MEK). With PTC1, regulates endoplasmic reticulum inheritance through the cell wall integrity (CWI) MAPK pathway by modulating the MAPK, SLT2. This Saccharomyces cerevisiae (strain ATCC 204508 / S288c) (Baker's yeast) protein is NAP1-binding protein 2 (NBP2).